The chain runs to 60 residues: UPF0434 protein NMA0874 (60 aa).

This sequence belongs to the UPF0434 family.

In Neisseria meningitidis serogroup A / serotype 4A (strain DSM 15465 / Z2491), this protein is UPF0434 protein NMA0874.